Consider the following 612-residue polypeptide: Peroxisomal carnitine O-octanoyltransferase (612 aa).

The residue at position 1 (Met-1) is an N-acetylmethionine. Lys-40 and Lys-57 each carry N6-succinyllysine. His-327 serves as the catalytic Proton acceptor. Residues Lys-406 and 410–417 (KEEALHPD) each bind CoA. Lys-406 is subject to N6-acetyllysine; alternate. Lys-406 carries the post-translational modification N6-succinyllysine; alternate. Residues Tyr-439, Thr-441, and Thr-452 each coordinate (R)-carnitine. Positions 610–612 (AHL) match the Microbody targeting signal motif.

It belongs to the carnitine/choline acetyltransferase family.

The protein localises to the peroxisome. It catalyses the reaction octanoyl-CoA + (R)-carnitine = O-octanoyl-(R)-carnitine + CoA. The enzyme catalyses 4,8-dimethylnonanoyl-CoA + (R)-carnitine = O-4,8-dimethylnonanoyl-(R)-carnitine + CoA. Its pathway is lipid metabolism; fatty acid beta-oxidation. In terms of biological role, beta-oxidation of fatty acids. The highest activity concerns the C6 to C10 chain length substrate. The protein is Peroxisomal carnitine O-octanoyltransferase (Crot) of Mus musculus (Mouse).